The following is an 831-amino-acid chain: Periplasmic nitrate reductase (831 aa).

Residues methionine 1–alanine 38 constitute a signal peptide (tat-type signal). In terms of domain architecture, 4Fe-4S Mo/W bis-MGD-type spans leucine 41–aspartate 97. Residues cysteine 48, cysteine 51, cysteine 55, and cysteine 83 each contribute to the [4Fe-4S] cluster site. Mo-bis(molybdopterin guanine dinucleotide)-binding positions include lysine 85, glutamine 152, asparagine 177, cysteine 181, tryptophan 214–methionine 221, serine 245–histidine 249, glutamine 264–aspartate 266, methionine 375, glutamine 379, asparagine 485, serine 511–aspartate 512, lysine 534, aspartate 561, and threonine 721–serine 730. Tryptophan 797 provides a ligand contact to substrate. Mo-bis(molybdopterin guanine dinucleotide)-binding residues include asparagine 805 and lysine 822.

This sequence belongs to the prokaryotic molybdopterin-containing oxidoreductase family. NasA/NapA/NarB subfamily. Component of the periplasmic nitrate reductase NapAB complex composed of NapA and NapB. [4Fe-4S] cluster is required as a cofactor. The cofactor is Mo-bis(molybdopterin guanine dinucleotide). Post-translationally, predicted to be exported by the Tat system. The position of the signal peptide cleavage has not been experimentally proven.

The protein resides in the periplasm. The catalysed reaction is 2 Fe(II)-[cytochrome] + nitrate + 2 H(+) = 2 Fe(III)-[cytochrome] + nitrite + H2O. Catalytic subunit of the periplasmic nitrate reductase complex NapAB. Receives electrons from NapB and catalyzes the reduction of nitrate to nitrite. This chain is Periplasmic nitrate reductase, found in Bordetella parapertussis (strain 12822 / ATCC BAA-587 / NCTC 13253).